The sequence spans 561 residues: Glutamate--tRNA ligase (561 aa).

A 'HIGH' region motif is present at residues 107–117 (PNPSGPLHLGH).

It belongs to the class-I aminoacyl-tRNA synthetase family. Glutamate--tRNA ligase type 2 subfamily.

It localises to the cytoplasm. It carries out the reaction tRNA(Glu) + L-glutamate + ATP = L-glutamyl-tRNA(Glu) + AMP + diphosphate. Its function is as follows. Catalyzes the attachment of glutamate to tRNA(Glu) in a two-step reaction: glutamate is first activated by ATP to form Glu-AMP and then transferred to the acceptor end of tRNA(Glu). This is Glutamate--tRNA ligase from Methanoculleus marisnigri (strain ATCC 35101 / DSM 1498 / JR1).